The chain runs to 1049 residues: Multiple C2 domain and transmembrane region protein 16 (1049 aa).

Residues 1-112 form the C2 1 domain; the sequence is MATTRKLVVE…VGQGEEALIY (112 aa). A disordered region spans residues 136 to 249; it reads DEKPPPLKPT…PPQNQPDGED (114 aa). Composition is skewed to basic and acidic residues over residues 153–170 and 226–238; these read VEEKTEETKAEGPDESKP and ESDKNEAEAKPVE. 3 C2 domains span residues 302 to 426, 460 to 582, and 617 to 745; these read TSEI…PQWY, TAGN…SRWL, and VCSD…RNTY. Ca(2+)-binding residues include Ser-338, Asp-390, Thr-393, and Ser-398. The next 2 helical transmembrane spans lie at 883-903 and 989-1009; these read VMLIWFPDLIVPTLAFYLFVI and ATGIFVGLCFFVALVLYLVPT.

The protein belongs to the MCTP family. Requires Ca(2+) as cofactor. As to expression, expressed in the vascular tissues of roots, cotyledons and rosette leaves. Accumulates in roots meristems and shoot apical meristems (SAMs). Observed in flowers.

The protein localises to the endoplasmic reticulum membrane. In terms of biological role, may function as a signaling molecule by regulating the trafficking of other regulators. This chain is Multiple C2 domain and transmembrane region protein 16, found in Arabidopsis thaliana (Mouse-ear cress).